Here is a 571-residue protein sequence, read N- to C-terminus: Proline--tRNA ligase (571 aa).

Belongs to the class-II aminoacyl-tRNA synthetase family. ProS type 1 subfamily. As to quaternary structure, homodimer.

It localises to the cytoplasm. It catalyses the reaction tRNA(Pro) + L-proline + ATP = L-prolyl-tRNA(Pro) + AMP + diphosphate. In terms of biological role, catalyzes the attachment of proline to tRNA(Pro) in a two-step reaction: proline is first activated by ATP to form Pro-AMP and then transferred to the acceptor end of tRNA(Pro). As ProRS can inadvertently accommodate and process non-cognate amino acids such as alanine and cysteine, to avoid such errors it has two additional distinct editing activities against alanine. One activity is designated as 'pretransfer' editing and involves the tRNA(Pro)-independent hydrolysis of activated Ala-AMP. The other activity is designated 'posttransfer' editing and involves deacylation of mischarged Ala-tRNA(Pro). The misacylated Cys-tRNA(Pro) is not edited by ProRS. This Pediococcus pentosaceus (strain ATCC 25745 / CCUG 21536 / LMG 10740 / 183-1w) protein is Proline--tRNA ligase.